A 128-amino-acid polypeptide reads, in one-letter code: UPF0325 protein YaeH (128 aa).

This sequence belongs to the UPF0325 family.

The sequence is that of UPF0325 protein YaeH from Shigella boydii serotype 18 (strain CDC 3083-94 / BS512).